The following is a 253-amino-acid chain: Indole-3-glycerol phosphate synthase (253 aa).

This sequence belongs to the TrpC family.

It catalyses the reaction 1-(2-carboxyphenylamino)-1-deoxy-D-ribulose 5-phosphate + H(+) = (1S,2R)-1-C-(indol-3-yl)glycerol 3-phosphate + CO2 + H2O. The protein operates within amino-acid biosynthesis; L-tryptophan biosynthesis; L-tryptophan from chorismate: step 4/5. This is Indole-3-glycerol phosphate synthase from Bacillus cereus (strain ATCC 10987 / NRS 248).